The following is a 48-amino-acid chain: Delta-actitoxin-Bcg1b (48 aa).

3 cysteine pairs are disulfide-bonded: Cys-4–Cys-45, Cys-6–Cys-35, and Cys-28–Cys-46.

The protein belongs to the sea anemone sodium channel inhibitory toxin family. Type I subfamily.

The protein resides in the secreted. Its subcellular location is the nematocyst. Binds to the sodium channels Nav1.1/SCN1A (EC(50)=165 nM), Nav1.5/SCN5A (EC(50)=103 nM) and Nav1.6/SCN8A (EC(50)=133 nM), thereby delaying their inactivation. Also inhibits Nav1.2/SCN2A, Nav1.3/SCN3A, and Nav1.4/SCN4A, but to a lesser extent. Inhibits Nav1.5 differently from isoforms Nav1.1 and Nav1.6. In Nav1.5 the effect consists in a right-shift of inactivation; whereas in both Nav1.1 and Nav1.6 the effect consists in an incomplete inactivation. This is Delta-actitoxin-Bcg1b from Bunodosoma cangicum (Sea anemone).